The primary structure comprises 688 residues: G-protein coupled receptor-associated protein LMBRD2 (688 aa).

Residues 1 to 3 (MSG) lie on the Extracellular side of the membrane. Residues 4–21 (AALGLEIVFVFFLALFLL) form a helical membrane-spanning segment. At 22 to 32 (HRYGDFKKQHR) the chain is on the cytoplasmic side. The chain crosses the membrane as a helical span at residues 33 to 53 (LVIIATLLAWYLCFLIVFILP). Over 54-99 (LDVSTTIYNRCKLAVNSSPAESNSSFVTLAPSKQQCFKPWSYIPNG) the chain is Extracellular. N-linked (GlcNAc...) asparagine glycosylation is present at Asn76. A helical transmembrane segment spans residues 100–120 (IMPIFWRVVYWTSQFLTWILL). The Cytoplasmic segment spans residues 121-144 (PFMQSYARSGGFSITGKIKTALIE). Residues 145–165 (NAIYYGTYLLIFGAFLIYVAV) traverse the membrane as a helical segment. Residues 166-180 (NPKFNLQWNQLQTIG) lie on the Extracellular side of the membrane. The helical transmembrane segment at 181-201 (IAAANTWGLFLLVLLLGYGLV) threads the bilayer. The Cytoplasmic segment spans residues 202 to 381 (EIPRSHWNGA…ECLLRPWFYR (180 aa)). The stretch at 222–254 (FKAAKLMTEKADAEENLEDIMEEVRKVSESIKY) forms a coiled coil. Residues 382–402 (VLAVVLAAFSVIVVWSECTFF) form a helical membrane-spanning segment. The Extracellular portion of the chain corresponds to 403–426 (STRPVLSLVAVFIQLAEKTYNYIY). Residues 427-447 (IEMACFLTIFFLSICVYSTVF) form a helical membrane-spanning segment. Over 448 to 467 (RIRVFNYYYLASHHQTDAYS) the chain is Cytoplasmic. Residues 468–488 (LLFSGMLFCRLTPPLCLNFLG) traverse the membrane as a helical segment. The Extracellular portion of the chain corresponds to 489–515 (LTHMDATISHTDAQPTAYTSIMGSMKV). The chain crosses the membrane as a helical span at residues 516 to 536 (LSFIADGFYIYYPMLVVILCI). At 537–688 (ATYFSLGTRC…MSRSRIFEDV (152 aa)) the chain is on the cytoplasmic side. The span at 600-617 (REDSTRNRVVHTEQKESS) shows a compositional bias: basic and acidic residues. Residues 600-673 (REDSTRNRVV…ESDSGRYQPG (74 aa)) are disordered. Over residues 618-634 (FSETNTNRPLSKYTRTN) the composition is skewed to polar residues. Residues 635 to 644 (GRTERDRIEL) show a composition bias toward basic and acidic residues.

It belongs to the LIMR family.

It is found in the cell membrane. Its function is as follows. May associate with G-protein coupled receptors and regulate downstream signaling pathways. In Gallus gallus (Chicken), this protein is G-protein coupled receptor-associated protein LMBRD2.